The chain runs to 427 residues: MNAHAQACAVTSSSPDGVLRERGQREVFCGLTGIVWLHRKIQDAFFLVVGSRTCAHLIQSAAGVMIFAEPRFATAIMEERDLAGLVDANDELDRIVAQLLARRPDIKLLFLVGSCPSEVIKLDLSRAALRLSQRFSPGVRVLNYSGSGIETTFTQGEDACLAALVPVLPSADRNARPSLLVVGALADVVEDQFKRTFAALGIDNVAFLPPRRSSELPAIGPETRVLLAQPFLGDTARALEERGCRRISAPFPLGGEGTALWLAAAADAFGVSRAHVERTLAPLKARAEKALARYRAQLAGKRVFLFPDSQIEIPLARFLAREIGMELVEVGTPYLHRDHLAAELPMLPAGTLLSEGQDVERQLDRCREARPDLVVCGLGLANPLEAEGLTTKWSIELIFTPIQGFEQAGDLAELFARPLLRQTRLAV.

The [4Fe-4S] cluster site is built by cysteine 29, cysteine 54, and cysteine 115.

It belongs to the BchN/ChlN family. In terms of assembly, protochlorophyllide reductase is composed of three subunits; BchL, BchN and BchB. Forms a heterotetramer of two BchB and two BchN subunits. The cofactor is [4Fe-4S] cluster.

It carries out the reaction chlorophyllide a + oxidized 2[4Fe-4S]-[ferredoxin] + 2 ADP + 2 phosphate = protochlorophyllide a + reduced 2[4Fe-4S]-[ferredoxin] + 2 ATP + 2 H2O. Its pathway is porphyrin-containing compound metabolism; bacteriochlorophyll biosynthesis (light-independent). Its function is as follows. Component of the dark-operative protochlorophyllide reductase (DPOR) that uses Mg-ATP and reduced ferredoxin to reduce ring D of protochlorophyllide (Pchlide) to form chlorophyllide a (Chlide). This reaction is light-independent. The NB-protein (BchN-BchB) is the catalytic component of the complex. The protein is Light-independent protochlorophyllide reductase subunit N of Bradyrhizobium sp. (strain ORS 278).